We begin with the raw amino-acid sequence, 485 residues long: Glutamate--tRNA ligase (485 aa).

The 'HIGH' region motif lies at 11–21 (PSPTGYMHVGN). 4 residues coordinate Zn(2+): cysteine 108, cysteine 110, cysteine 135, and aspartate 137. Residues 252–256 (KLSKR) carry the 'KMSKS' region motif. Lysine 255 is an ATP binding site.

It belongs to the class-I aminoacyl-tRNA synthetase family. Glutamate--tRNA ligase type 1 subfamily. As to quaternary structure, monomer. Requires Zn(2+) as cofactor.

Its subcellular location is the cytoplasm. The catalysed reaction is tRNA(Glu) + L-glutamate + ATP = L-glutamyl-tRNA(Glu) + AMP + diphosphate. Catalyzes the attachment of glutamate to tRNA(Glu) in a two-step reaction: glutamate is first activated by ATP to form Glu-AMP and then transferred to the acceptor end of tRNA(Glu). The chain is Glutamate--tRNA ligase from Clostridium botulinum (strain ATCC 19397 / Type A).